Reading from the N-terminus, the 413-residue chain is Glucose-1-phosphate adenylyltransferase (413 aa).

Residues Gly-169, Glu-184 to Lys-185, and Ser-201 each bind alpha-D-glucose 1-phosphate.

The protein belongs to the bacterial/plant glucose-1-phosphate adenylyltransferase family. Homotetramer.

The enzyme catalyses alpha-D-glucose 1-phosphate + ATP + H(+) = ADP-alpha-D-glucose + diphosphate. The protein operates within glycan biosynthesis; glycogen biosynthesis. Its function is as follows. Involved in the biosynthesis of ADP-glucose, a building block required for the elongation reactions to produce glycogen. Catalyzes the reaction between ATP and alpha-D-glucose 1-phosphate (G1P) to produce pyrophosphate and ADP-Glc. This Trichlorobacter lovleyi (strain ATCC BAA-1151 / DSM 17278 / SZ) (Geobacter lovleyi) protein is Glucose-1-phosphate adenylyltransferase.